The chain runs to 289 residues: ATP synthase gamma chain (289 aa).

The protein belongs to the ATPase gamma chain family. As to quaternary structure, F-type ATPases have 2 components, CF(1) - the catalytic core - and CF(0) - the membrane proton channel. CF(1) has five subunits: alpha(3), beta(3), gamma(1), delta(1), epsilon(1). CF(0) has three main subunits: a, b and c.

It is found in the cell inner membrane. Its function is as follows. Produces ATP from ADP in the presence of a proton gradient across the membrane. The gamma chain is believed to be important in regulating ATPase activity and the flow of protons through the CF(0) complex. The chain is ATP synthase gamma chain from Histophilus somni (strain 2336) (Haemophilus somnus).